Consider the following 239-residue polypeptide: uncharacterized protein (239 aa).

The N-terminal stretch at 1-19 (MPLLHRTIIFLQLLGTISS) is a signal peptide. 9 N-linked (GlcNAc...) asparagine glycosylation sites follow: asparagine 44, asparagine 58, asparagine 72, asparagine 92, asparagine 109, asparagine 136, asparagine 172, asparagine 192, and asparagine 213.

Its subcellular location is the secreted. This is an uncharacterized protein from Caenorhabditis elegans.